The primary structure comprises 520 residues: GMP synthase [glutamine-hydrolyzing] (520 aa).

The Glutamine amidotransferase type-1 domain occupies 9-202 (TILIIDFGSQ…VHRIVGVKPG (194 aa)). C86 (nucleophile) is an active-site residue. Residues H176 and E178 contribute to the active site. A GMPS ATP-PPase domain is found at 203-395 (WTMGAYREQA…LGLPDSFIGR (193 aa)). Residue 230 to 236 (SGGVDSS) coordinates ATP.

Homodimer.

The catalysed reaction is XMP + L-glutamine + ATP + H2O = GMP + L-glutamate + AMP + diphosphate + 2 H(+). It participates in purine metabolism; GMP biosynthesis; GMP from XMP (L-Gln route): step 1/1. Catalyzes the synthesis of GMP from XMP. The chain is GMP synthase [glutamine-hydrolyzing] from Brucella ovis (strain ATCC 25840 / 63/290 / NCTC 10512).